A 65-amino-acid chain; its full sequence is UPF0434 protein bsr0601 (65 aa).

The protein belongs to the UPF0434 family.

The chain is UPF0434 protein bsr0601 from Bradyrhizobium diazoefficiens (strain JCM 10833 / BCRC 13528 / IAM 13628 / NBRC 14792 / USDA 110).